A 563-amino-acid chain; its full sequence is Arginine--tRNA ligase (563 aa).

The 'HIGH' region motif lies at 121–131 (PNIAKPFSIGH).

The protein belongs to the class-I aminoacyl-tRNA synthetase family. In terms of assembly, monomer.

It localises to the cytoplasm. The catalysed reaction is tRNA(Arg) + L-arginine + ATP = L-arginyl-tRNA(Arg) + AMP + diphosphate. In Streptococcus agalactiae serotype Ia (strain ATCC 27591 / A909 / CDC SS700), this protein is Arginine--tRNA ligase.